The following is a 154-amino-acid chain: Myoglobin (154 aa).

Residues glycine 2 to lysine 148 enclose the Globin domain. Position 4 is a phosphoserine (serine 4). A nitrite-binding site is contributed by histidine 65. Histidine 65 lines the O2 pocket. At threonine 68 the chain carries Phosphothreonine. Histidine 94 contacts heme b.

It belongs to the globin family. As to quaternary structure, monomeric.

It is found in the cytoplasm. The protein localises to the sarcoplasm. The enzyme catalyses Fe(III)-heme b-[protein] + nitric oxide + H2O = Fe(II)-heme b-[protein] + nitrite + 2 H(+). The catalysed reaction is H2O2 + AH2 = A + 2 H2O. Its function is as follows. Monomeric heme protein which primary function is to store oxygen and facilitate its diffusion within muscle tissues. Reversibly binds oxygen through a pentacoordinated heme iron and enables its timely and efficient release as needed during periods of heightened demand. Depending on the oxidative conditions of tissues and cells, and in addition to its ability to bind oxygen, it also has a nitrite reductase activity whereby it regulates the production of bioactive nitric oxide. Under stress conditions, like hypoxia and anoxia, it also protects cells against reactive oxygen species thanks to its pseudoperoxidase activity. This chain is Myoglobin (MB), found in Erinaceus europaeus (Western European hedgehog).